The following is a 277-amino-acid chain: Undecaprenyl-diphosphatase (277 aa).

The next 6 helical transmembrane spans lie at 88 to 108 (MGWL…LFQD), 117 to 137 (MWIV…ADAV), 157 to 179 (FAQA…AGLL), 191 to 211 (SFLL…YKTV), 227 to 247 (LATV…LKFV), and 255 to 275 (FVWY…FNVI).

It belongs to the UppP family.

The protein resides in the cell membrane. It carries out the reaction di-trans,octa-cis-undecaprenyl diphosphate + H2O = di-trans,octa-cis-undecaprenyl phosphate + phosphate + H(+). Functionally, catalyzes the dephosphorylation of undecaprenyl diphosphate (UPP). Confers resistance to bacitracin. This is Undecaprenyl-diphosphatase from Paenarthrobacter aurescens (strain TC1).